A 590-amino-acid polypeptide reads, in one-letter code: Nuclear receptor subfamily 2 group C member 1 (590 aa).

The required for interaction with KAT2B stretch occupies residues 1–166; it reads MATIEEIAHQ…RLQRCIAFGM (166 aa). Positions 98–173 form a DNA-binding region, nuclear receptor; sequence FDLCVVCGDK…FGMKQDSVQC (76 aa). NR C4-type zinc fingers lie at residues 101-121 and 137-156; these read CVVC…CEGC and CRGS…CQYC. A phosphoserine mark is found at Ser185 and Ser203. Thr208 carries the post-translational modification Phosphothreonine. Residue Thr210 is modified to Phosphothreonine; by MAPK1. A Glycyl lysine isopeptide (Lys-Gly) (interchain with G-Cter in SUMO); alternate cross-link involves residue Lys238. Residue Lys238 forms a Glycyl lysine isopeptide (Lys-Gly) (interchain with G-Cter in SUMO2); alternate linkage. Positions 333–577 constitute an NR LBD domain; sequence EGMEGSPHLI…SVIPHILKME (245 aa). 2 positions are modified to phosphoserine; by PKC: Ser461 and Ser568. The required for interaction with NRIP1 stretch occupies residues 571–590; it reads PHILKMEPADYNSQIIGHSL. Lys575 participates in a covalent cross-link: Glycyl lysine isopeptide (Lys-Gly) (interchain with G-Cter in SUMO2).

The protein belongs to the nuclear hormone receptor family. NR2 subfamily. Homodimer. Heterodimer; with NR2C2 which is required for chromatin remodeling and for binding to promoter regions such as globin DR1 repeats. Interacts with ESR1; the interaction prevents homodimerization of ESR1 and suppresses its transcriptional activity and cell growth. Interacts with NRIP1 (via its LXXLL motifs); the interaction provides corepressor activity. Interacts with HDAC3 (via the DNA-binding domain); the interaction recruits phosphorylated NR2C1 to PML bodies for sumoylation. Interacts with HDAC4 (via the DNA-binding domain). Interacts with PIAS1; the interaction is required for sumoylation of NR2C1. Interacts with UBE2I; the interaction is required for sumoylation of NR2C1. Interacts with KAT2B; the interaction acts as a corepressor of gene expression. Sumoylation requires both PIAS1 and UBE2I. Sumoylation appears to dissociate NR2C1 from the PML nuclear bodies. Enhances the interaction with NRIP1 but inhibits interaction with KAT2B. In proliferating cells, stimulation by all-trans retinoic acid, activation of MAPK1-mediated phosphorylation and recruitment to PML bodies with subsequent sumoylation, suppresses OCT4 expression. In terms of processing, phosphorylated on several serine and threonine residues. Phosphorylation on Thr-210, stimulated by all-trans retinoic acid (atRA) mediates PML location and sumoylation in proliferating cells which then modulates its association with effector molecules, KAT2B and NRIP1. Phosphorylation on Ser-568 by PKC is important for protein stability and function as activator of RARB. Isoform 1 is highly expressed in the adlumenal compartment of the seminiferous tubule of adult testes (at protein level) and in the eyes of newborn animals. Weakly expressed in other adult organs including the seminal vesicle, prostate, ovary, adrenal gland, heart, thymus, placenta and brain. Expressed during embryonic stages in developing eyes, brain and cartilage primordia (at protein level). Also expressed in the developing spinal motor neurons and in the sympathetic-, parasympathetic- and sensory ganglia of the embryonic PNS. Expressed in the developing neural epithelia of the inner ear, nasal cavity, tongue and retina. At day 16.5, expressed in various tissues including kidney and intestine. In contrast, isoform 2 is widely expressed at a low level throughout the adult testis.

It localises to the nucleus. The protein localises to the PML body. In terms of biological role, orphan nuclear receptor. Binds the IR7 element in the promoter of its own gene in an autoregulatory negative feedback mechanism. Primarily repressor of a broad range of genes including ESR1 and RARB. Together with NR2C2, forms the core of the DRED (direct repeat erythroid-definitive) complex that represses embryonic and fetal globin transcription. Binds to hormone response elements (HREs) consisting of two 5'-AGGTCA-3' half site direct repeat consensus sequences. Also activator of OCT4 gene expression. Plays a fundamental role in early embryogenesis and regulates embryonic stem cell proliferation and differentiation. Mediator of retinoic acid-regulated preadipocyte proliferation. The chain is Nuclear receptor subfamily 2 group C member 1 from Mus musculus (Mouse).